The sequence spans 662 residues: Glycine--tRNA ligase beta subunit (662 aa).

Belongs to the class-II aminoacyl-tRNA synthetase family. Tetramer of two alpha and two beta subunits.

The protein resides in the cytoplasm. It catalyses the reaction tRNA(Gly) + glycine + ATP = glycyl-tRNA(Gly) + AMP + diphosphate. This is Glycine--tRNA ligase beta subunit from Rickettsia akari (strain Hartford).